Reading from the N-terminus, the 475-residue chain is Ribulose bisphosphate carboxylase large chain (475 aa).

A propeptide spanning residues 1 to 2 is cleaved from the precursor; the sequence is MS. P3 is modified (N-acetylproline). K14 is modified (N6,N6,N6-trimethyllysine). Substrate-binding residues include N123 and T173. K175 functions as the Proton acceptor in the catalytic mechanism. K177 lines the substrate pocket. Mg(2+)-binding residues include K201, D203, and E204. K201 is modified (N6-carboxylysine). The active-site Proton acceptor is H294. 3 residues coordinate substrate: R295, H327, and S379.

This sequence belongs to the RuBisCO large chain family. Type I subfamily. Heterohexadecamer of 8 large chains and 8 small chains; disulfide-linked. The disulfide link is formed within the large subunit homodimers. Mg(2+) is required as a cofactor. The disulfide bond which can form in the large chain dimeric partners within the hexadecamer appears to be associated with oxidative stress and protein turnover.

The protein localises to the plastid. It localises to the chloroplast. The catalysed reaction is 2 (2R)-3-phosphoglycerate + 2 H(+) = D-ribulose 1,5-bisphosphate + CO2 + H2O. The enzyme catalyses D-ribulose 1,5-bisphosphate + O2 = 2-phosphoglycolate + (2R)-3-phosphoglycerate + 2 H(+). In terms of biological role, ruBisCO catalyzes two reactions: the carboxylation of D-ribulose 1,5-bisphosphate, the primary event in carbon dioxide fixation, as well as the oxidative fragmentation of the pentose substrate in the photorespiration process. Both reactions occur simultaneously and in competition at the same active site. The polypeptide is Ribulose bisphosphate carboxylase large chain (Pinus edulis (Pinyon pine)).